A 127-amino-acid polypeptide reads, in one-letter code: Mini-ribonuclease 3-like protein (127 aa).

Aspartate 19 is a catalytic residue.

Belongs to the MrnC RNase family.

Functionally, might be a ribonuclease involved in RNA processing. This chain is Mini-ribonuclease 3-like protein (mrnCL), found in Ilyobacter polytropus (strain ATCC 51220 / DSM 2926 / LMG 16218 / CuHBu1).